A 487-amino-acid chain; its full sequence is Serine/threonine-protein kinase 4 (487 aa).

Met-1 carries the N-acetylmethionine modification. A Phosphothreonine modification is found at Thr-3. Residues 30–281 (FDVLEKLGEG…ATQLLQHPFV (252 aa)) form the Protein kinase domain. Residues 36–44 (LGEGSYGSV) and Lys-59 contribute to the ATP site. Catalysis depends on Asp-149, which acts as the Proton acceptor. Phosphothreonine; by autocatalysis is present on Thr-183. Ser-265 carries the post-translational modification Phosphoserine. A coiled-coil region spans residues 290–310 (LRDLINEAMDVKLKRQEAQQR). The interval 305 to 337 (QEAQQREVDQDDEENSEEDELDSGTMVRAVGDE) is disordered. The span at 313–326 (DQDDEENSEEDELD) shows a compositional bias: acidic residues. At Ser-320 the chain carries Phosphoserine. 2 positions are modified to phosphothreonine: Thr-340 and Thr-367. Phosphothreonine; by PKB/AKT1 is present on Thr-387. Phosphoserine occurs at positions 410 and 414. At Tyr-433 the chain carries Phosphotyrosine. The 48-residue stretch at 433-480 (YEFLKSWTVEDLQKRLLALDPMMEQEIEEIRQKYQSKRQPILDAIEAK) folds into the SARAH domain.

This sequence belongs to the protein kinase superfamily. STE Ser/Thr protein kinase family. STE20 subfamily. Homodimer; mediated via the coiled-coil region. Interacts with NORE1, which inhibits autoactivation. Interacts with and stabilizes SAV1. Interacts with RASSF1. Interacts with FOXO3. Interacts with RASSF2 (via SARAH domain). Interacts with AR, PKB/AKT1, TNNI3 and SIRT1. Interacts with DLG5 (via PDZ domain 3). Interacts with MARK3 and SCRIB in the presence of DLG5. The cofactor is Mg(2+). In terms of processing, autophosphorylated on serine and threonine residues. Phosphorylation at Thr-387 by PKB/AKT1, leads to inhibition of its: kinase activity, nuclear translocation and autophosphorylation at Thr-183. It also diminishes its cleavage by caspases and its ability to phosphorylate FOXO3. Proteolytically cleaved by caspase-3 during apoptosis at Asp-326 and Asp-349 resulting in a 37 kDa or a 39 kDa subunit respectively. The 39 kDa subunit is further cleaved into the 37 kDa form. Proteolytic cleavage results in kinase activation and nuclear translocation of the truncated form (MST1/N). It is less likely that cleavage at Asp-349 is a prerequisite for activation as this site is not conserved in the murine ortholog.

It localises to the cytoplasm. It is found in the nucleus. It carries out the reaction L-seryl-[protein] + ATP = O-phospho-L-seryl-[protein] + ADP + H(+). It catalyses the reaction L-threonyl-[protein] + ATP = O-phospho-L-threonyl-[protein] + ADP + H(+). Its activity is regulated as follows. Inhibited by the C-terminal non-catalytic region. Activated by caspase-cleavage. Full activation also requires homodimerization and autophosphorylation of Thr-183. Activated by RASSF1 which acts by preventing its dephosphorylation. Stress-activated, pro-apoptotic kinase which, following caspase-cleavage, enters the nucleus and induces chromatin condensation followed by internucleosomal DNA fragmentation. Key component of the Hippo signaling pathway which plays a pivotal role in organ size control and tumor suppression by restricting proliferation and promoting apoptosis. The core of this pathway is composed of a kinase cascade wherein STK3/MST2 and STK4/MST1, in complex with its regulatory protein SAV1, phosphorylates and activates LATS1/2 in complex with its regulatory protein MOB1, which in turn phosphorylates and inactivates YAP1 oncoprotein and WWTR1/TAZ. Phosphorylation of YAP1 by LATS2 inhibits its translocation into the nucleus to regulate cellular genes important for cell proliferation, cell death, and cell migration. STK3/MST2 and STK4/MST1 are required to repress proliferation of mature hepatocytes, to prevent activation of facultative adult liver stem cells (oval cells), and to inhibit tumor formation. Phosphorylates 'Ser-14' of histone H2B (H2BS14ph) during apoptosis. Phosphorylates FOXO3 upon oxidative stress, which results in its nuclear translocation and cell death initiation. Phosphorylates MOBKL1A, MOBKL1B and RASSF2. Phosphorylates TNNI3 (cardiac Tn-I) and alters its binding affinity to TNNC1 (cardiac Tn-C) and TNNT2 (cardiac Tn-T). Phosphorylates FOXO1 on 'Ser-212' and regulates its activation and stimulates transcription of PMAIP1 in a FOXO1-dependent manner. Phosphorylates SIRT1 and inhibits SIRT1-mediated p53/TP53 deacetylation, thereby promoting p53/TP53 dependent transcription and apoptosis upon DNA damage. Acts as an inhibitor of PKB/AKT1. Phosphorylates AR on 'Ser-650' and suppresses its activity by intersecting with PKB/AKT1 signaling and antagonizing formation of AR-chromatin complexes. The polypeptide is Serine/threonine-protein kinase 4 (STK4) (Otolemur garnettii (Small-eared galago)).